We begin with the raw amino-acid sequence, 385 residues long: Meiosis-specific protein MEI4 (385 aa).

Positions 1–126 (MDVQKWYLRT…LSQHFVESCT (126 aa)) are interaction with REC114. A disordered region spans residues 86–110 (AQEPKSSESTLTSMEDSGCDLSNEQ). Residues 92–107 (SESTLTSMEDSGCDLS) are compositionally biased toward polar residues.

Belongs to the MEI4L family. In terms of assembly, part of the MCD recombinosome complex, at least composed of IHO1, REC114 and MEI4. Forms a complex with REC114; the interaction is required for MEI4 stability. Interacts (via N-terminal domain) with REC114 (via C-terminal domain). Interacts with IHO1.

The protein resides in the chromosome. Its function is as follows. Required for DNA double-strand breaks (DSBs) formation in unsynapsed regions during meiotic recombination. Probably acts by forming a complex with IHO1 and REC114, which activates DSBs formation in unsynapsed regions, an essential step to ensure completion of synapsis. The sequence is that of Meiosis-specific protein MEI4 from Homo sapiens (Human).